The following is a 1056-amino-acid chain: Carbamoyl phosphate synthase large chain (1056 aa).

The segment at 1–397 (MPKKSHIKKV…AFKKALRSLD (397 aa)) is carboxyphosphate synthetic domain. ATP contacts are provided by Arg-127, Arg-167, Gly-173, Gly-174, Glu-206, Val-208, Glu-213, Gly-239, Ile-240, His-241, Gln-282, and Glu-294. Residues 131–323 (RDLMNAIGEP…IARVAAKIAI (193 aa)) form the ATP-grasp 1 domain. Positions 282, 294, and 296 each coordinate Mg(2+). Gln-282, Glu-294, and Asn-296 together coordinate Mn(2+). Residues 398 to 530 (NDMQQHTNPS…YSTWEEGCEL (133 aa)) are oligomerization domain. Residues 531–920 (VRDSAKKVLI…YKACTAADNT (390 aa)) are carbamoyl phosphate synthetic domain. The region spanning 662-853 (SRLLTRLEIP…LAKIAAKVMV (192 aa)) is the ATP-grasp 2 domain. The ATP site is built by Arg-698, Ser-737, Leu-739, Glu-744, Gly-769, Val-770, His-771, Ser-772, Gln-812, and Glu-824. Residues Gln-812, Glu-824, and Asn-826 each coordinate Mg(2+). Mn(2+)-binding residues include Gln-812, Glu-824, and Asn-826. Positions 919-1056 (NTLPTTGNVF…EPLGHYHGLM (138 aa)) constitute an MGS-like domain. Residues 921–1056 (LPTTGNVFIS…EPLGHYHGLM (136 aa)) form an allosteric domain region.

It belongs to the CarB family. Composed of two chains; the small (or glutamine) chain promotes the hydrolysis of glutamine to ammonia, which is used by the large (or ammonia) chain to synthesize carbamoyl phosphate. Tetramer of heterodimers (alpha,beta)4. The cofactor is Mg(2+). Mn(2+) serves as cofactor.

The catalysed reaction is hydrogencarbonate + L-glutamine + 2 ATP + H2O = carbamoyl phosphate + L-glutamate + 2 ADP + phosphate + 2 H(+). It catalyses the reaction hydrogencarbonate + NH4(+) + 2 ATP = carbamoyl phosphate + 2 ADP + phosphate + 2 H(+). The protein operates within amino-acid biosynthesis; L-arginine biosynthesis; carbamoyl phosphate from bicarbonate: step 1/1. Its pathway is pyrimidine metabolism; UMP biosynthesis via de novo pathway; (S)-dihydroorotate from bicarbonate: step 1/3. Its function is as follows. Large subunit of the glutamine-dependent carbamoyl phosphate synthetase (CPSase). CPSase catalyzes the formation of carbamoyl phosphate from the ammonia moiety of glutamine, carbonate, and phosphate donated by ATP, constituting the first step of 2 biosynthetic pathways, one leading to arginine and/or urea and the other to pyrimidine nucleotides. The large subunit (synthetase) binds the substrates ammonia (free or transferred from glutamine from the small subunit), hydrogencarbonate and ATP and carries out an ATP-coupled ligase reaction, activating hydrogencarbonate by forming carboxy phosphate which reacts with ammonia to form carbamoyl phosphate. The polypeptide is Carbamoyl phosphate synthase large chain (Methanoculleus marisnigri (strain ATCC 35101 / DSM 1498 / JR1)).